The sequence spans 116 residues: Ribosome-binding factor A (116 aa).

It belongs to the RbfA family. Monomer. Binds 30S ribosomal subunits, but not 50S ribosomal subunits or 70S ribosomes.

It localises to the cytoplasm. Functionally, one of several proteins that assist in the late maturation steps of the functional core of the 30S ribosomal subunit. Associates with free 30S ribosomal subunits (but not with 30S subunits that are part of 70S ribosomes or polysomes). Required for efficient processing of 16S rRNA. May interact with the 5'-terminal helix region of 16S rRNA. The sequence is that of Ribosome-binding factor A from Clostridium botulinum (strain Alaska E43 / Type E3).